Here is a 447-residue protein sequence, read N- to C-terminus: Elongation factor 1-alpha (447 aa).

Positions 5–230 (KIHISIVVIG…DQINEPKRPS (226 aa)) constitute a tr-type G domain. The G1 stretch occupies residues 14 to 21 (GHVDSGKS). A GTP-binding site is contributed by 14–21 (GHVDSGKS). K55 is subject to N6,N6-dimethyllysine. A G2 region spans residues 70–74 (GITID). N6,N6,N6-trimethyllysine is present on K79. The tract at residues 91–94 (DAPG) is G3. GTP-binding positions include 91-95 (DAPGH) and 153-156 (NKMD). Residues 153-156 (NKMD) form a G4 region. K187 carries the N6,N6,N6-trimethyllysine modification. The G5 stretch occupies residues 194 to 196 (SGF). At K261 the chain carries N6-methyllysine. A 5-glutamyl glycerylphosphorylethanolamine modification is found at E289. An N6,N6,N6-trimethyllysine modification is found at K306. At E362 the chain carries 5-glutamyl glycerylphosphorylethanolamine. K396 bears the N6,N6,N6-trimethyllysine mark.

The protein belongs to the TRAFAC class translation factor GTPase superfamily. Classic translation factor GTPase family. EF-Tu/EF-1A subfamily.

It is found in the cytoplasm. This protein promotes the GTP-dependent binding of aminoacyl-tRNA to the A-site of ribosomes during protein biosynthesis. This Hordeum vulgare (Barley) protein is Elongation factor 1-alpha (BLT63).